Here is a 190-residue protein sequence, read N- to C-terminus: Protein PLANT CADMIUM RESISTANCE 10 (190 aa).

2 helical membrane-spanning segments follow: residues 78-98 and 108-125; these read LLGS…WALV and GALL…ACGY.

The protein belongs to the cornifelin family.

It is found in the membrane. Its function is as follows. May be involved in cadmium resistance. This chain is Protein PLANT CADMIUM RESISTANCE 10 (PCR10), found in Arabidopsis thaliana (Mouse-ear cress).